The sequence spans 174 residues: Crossover junction endodeoxyribonuclease RuvC (174 aa).

Catalysis depends on residues Asp8, Glu67, and Asp139. Positions 8, 67, and 139 each coordinate Mg(2+).

Belongs to the RuvC family. In terms of assembly, homodimer which binds Holliday junction (HJ) DNA. The HJ becomes 2-fold symmetrical on binding to RuvC with unstacked arms; it has a different conformation from HJ DNA in complex with RuvA. In the full resolvosome a probable DNA-RuvA(4)-RuvB(12)-RuvC(2) complex forms which resolves the HJ. Mg(2+) serves as cofactor.

It is found in the cytoplasm. The catalysed reaction is Endonucleolytic cleavage at a junction such as a reciprocal single-stranded crossover between two homologous DNA duplexes (Holliday junction).. Its function is as follows. The RuvA-RuvB-RuvC complex processes Holliday junction (HJ) DNA during genetic recombination and DNA repair. Endonuclease that resolves HJ intermediates. Cleaves cruciform DNA by making single-stranded nicks across the HJ at symmetrical positions within the homologous arms, yielding a 5'-phosphate and a 3'-hydroxyl group; requires a central core of homology in the junction. The consensus cleavage sequence is 5'-(A/T)TT(C/G)-3'. Cleavage occurs on the 3'-side of the TT dinucleotide at the point of strand exchange. HJ branch migration catalyzed by RuvA-RuvB allows RuvC to scan DNA until it finds its consensus sequence, where it cleaves and resolves the cruciform DNA. The chain is Crossover junction endodeoxyribonuclease RuvC from Pseudomonas putida (strain GB-1).